Here is an 84-residue protein sequence, read N- to C-terminus: M-myrmeciitoxin-Mb2a (84 aa).

Residues 1–21 (MKLSCLLLTLAIIFVLTIVHA) form the signal peptide. Positions 22–48 (PNVKAKALADPESDAVGFADAVGEADP) are excised as a propeptide.

This sequence belongs to the formicidae venom precursor-01 superfamily. Ant pilosulin family. Expressed by the venom gland.

The protein resides in the secreted. In terms of biological role, shows activity against E.coli and S.aureus (MIC&lt;6.25 uM), moderate activity against P.aeruginosa (MIC&lt;25 uM), weak activity against B.subtilis (MIC&lt;50 uM), and has no effect against L.garvieae, C.albicans, and S.cerevisiae. Has no hemolytic nor cytolytic activity. Causes an IgE-independent histamine release. This chain is M-myrmeciitoxin-Mb2a, found in Myrmecia banksi (Jack jumper ant).